Reading from the N-terminus, the 320-residue chain is Putative olfactory receptor 2W5 pseudogene (320 aa).

A glycan (N-linked (GlcNAc...) asparagine) is linked at Asn5. Helical transmembrane passes span 30-50 (VILIFCILTLVGNTAIILLLV), 58-78 (PMYFFLGNLSFLDLCFTASIA), 98-118 (VAQLYIYMMLGSTECVLLVVM), and 140-160 (LCLQLVTVAWCCGFLNSFIMC). A disulfide bridge connects residues Cys97 and Cys179. Residues 267–320 (LPRSGEVPDSLLHHRHSQHQPPHLHFEEQGCEGDHEETSGVGERGWGASTRGTL) form a disordered region. Positions 290-304 (LHFEEQGCEGDHEET) are enriched in basic and acidic residues.

The protein belongs to the G-protein coupled receptor 1 family.

The protein localises to the cell membrane. Its function is as follows. Odorant receptor. This chain is Putative olfactory receptor 2W5 pseudogene, found in Homo sapiens (Human).